A 313-amino-acid chain; its full sequence is MTKIVFMGTPAFSVPILESLIEAGYDVQAVVTQPDRPVGRKKVITPTPVKEAALKHNLLVLQPEKISGSPEMEKVIDLAPDLIVTAAFGQFLPEKILKAPKLGAINVHASLLPKYRGGAPVHYSIIEGEKETGVTIMEMVKKMDAGAILSQRAIPITKQDDVGTMFEKLSILGKELLLETLPKLIAGEITPIPQVEEEATFSPNITREQERIDWQKTAEAIDNQVRGMRPWPTAFTTYQGTNWKIWAVTPLTETTTSAPGTIIQRSKKALWIACGEGTVLQIDRLQPAGKGQLTIQEFLNGVGQNVAEKDKVD.

(6S)-5,6,7,8-tetrahydrofolate is bound at residue 110–113 (SLLP).

Belongs to the Fmt family.

The catalysed reaction is L-methionyl-tRNA(fMet) + (6R)-10-formyltetrahydrofolate = N-formyl-L-methionyl-tRNA(fMet) + (6S)-5,6,7,8-tetrahydrofolate + H(+). Attaches a formyl group to the free amino group of methionyl-tRNA(fMet). The formyl group appears to play a dual role in the initiator identity of N-formylmethionyl-tRNA by promoting its recognition by IF2 and preventing the misappropriation of this tRNA by the elongation apparatus. The polypeptide is Methionyl-tRNA formyltransferase (Enterococcus faecalis (strain ATCC 700802 / V583)).